The following is a 578-amino-acid chain: Keratin, type II cytoskeletal 1b (578 aa).

The tract at residues 1 to 163 is head; the sequence is MSHQFSSQSA…DPEIQRIKTQ (163 aa). Arginine 95 carries the post-translational modification Omega-N-methylarginine. The coil 1A stretch occupies residues 164–200; that stretch reads EREQIMVLNNKFASFIDKVRFLEQQNQVLQTKWELLQ. The IF rod domain maps to 164 to 477; sequence EREQIMVLNN…QLLEGEESRM (314 aa). The interval 201–219 is linker 1; the sequence is QVNTSTGTNNLEPLLENYI. The tract at residues 220 to 311 is coil 1B; the sequence is GDLRRQVDLL…LFLTELSQVQ (92 aa). Residues 312-335 form a linker 12 region; it reads THISDTNVILSMDNNRSLDLDSII. Residues 336–474 are coil 2; the sequence is DAVRTQYELI…TYRQLLEGEE (139 aa). Positions 475–578 are tail; that stretch reads SRMSGELQSH…TNTSHRRILE (104 aa). Arginine 523 carries the post-translational modification Omega-N-methylarginine. Gly residues predominate over residues 547-556; sequence GSYGGSGRSG. The interval 547 to 578 is disordered; it reads GSYGGSGRSGRGSSRVQIIQTSTNTSHRRILE. Residues 562–571 show a composition bias toward polar residues; it reads VQIIQTSTNT.

The protein belongs to the intermediate filament family. Post-translationally, undergoes deimination of some arginine residues (citrullination). As to expression, expressed exclusively in skin.

This chain is Keratin, type II cytoskeletal 1b (KRT77), found in Homo sapiens (Human).